The chain runs to 292 residues: tRNA pseudouridine synthase B (292 aa).

Asp-38 functions as the Nucleophile in the catalytic mechanism.

It belongs to the pseudouridine synthase TruB family. Type 1 subfamily.

The catalysed reaction is uridine(55) in tRNA = pseudouridine(55) in tRNA. Functionally, responsible for synthesis of pseudouridine from uracil-55 in the psi GC loop of transfer RNAs. This is tRNA pseudouridine synthase B from Streptococcus pneumoniae serotype 2 (strain D39 / NCTC 7466).